The sequence spans 1269 residues: DNA-directed RNA polymerase subunit beta'' (1269 aa).

Zn(2+)-binding residues include Cys-226, Cys-301, Cys-308, and Cys-311.

The protein belongs to the RNA polymerase beta' chain family. RpoC2 subfamily. In plastids the minimal PEP RNA polymerase catalytic core is composed of four subunits: alpha, beta, beta', and beta''. When a (nuclear-encoded) sigma factor is associated with the core the holoenzyme is formed, which can initiate transcription. The cofactor is Zn(2+).

Its subcellular location is the plastid. The protein resides in the chloroplast. The catalysed reaction is RNA(n) + a ribonucleoside 5'-triphosphate = RNA(n+1) + diphosphate. Functionally, DNA-dependent RNA polymerase catalyzes the transcription of DNA into RNA using the four ribonucleoside triphosphates as substrates. The sequence is that of DNA-directed RNA polymerase subunit beta'' from Cyanidium caldarium (Red alga).